The chain runs to 272 residues: 3-methyl-2-oxobutanoate hydroxymethyltransferase (272 aa).

Residues Asp-43 and Asp-82 each coordinate Mg(2+). 3-methyl-2-oxobutanoate contacts are provided by residues 43–44 (DS), Asp-82, and Lys-112. Glu-114 lines the Mg(2+) pocket. Glu-179 serves as the catalytic Proton acceptor.

Belongs to the PanB family. As to quaternary structure, homodecamer; pentamer of dimers. It depends on Mg(2+) as a cofactor.

The protein localises to the cytoplasm. It catalyses the reaction 3-methyl-2-oxobutanoate + (6R)-5,10-methylene-5,6,7,8-tetrahydrofolate + H2O = 2-dehydropantoate + (6S)-5,6,7,8-tetrahydrofolate. It functions in the pathway cofactor biosynthesis; (R)-pantothenate biosynthesis; (R)-pantoate from 3-methyl-2-oxobutanoate: step 1/2. In terms of biological role, catalyzes the reversible reaction in which hydroxymethyl group from 5,10-methylenetetrahydrofolate is transferred onto alpha-ketoisovalerate to form ketopantoate. The protein is 3-methyl-2-oxobutanoate hydroxymethyltransferase of Staphylococcus aureus (strain Mu3 / ATCC 700698).